The chain runs to 274 residues: Large ribosomal subunit protein uL2cz/uL2cy (274 aa).

2 disordered regions span residues Met-1–Lys-23 and Asn-224–Lys-274.

The protein belongs to the universal ribosomal protein uL2 family. As to quaternary structure, part of the 50S ribosomal subunit.

The protein localises to the plastid. Its subcellular location is the chloroplast. This Lactuca sativa (Garden lettuce) protein is Large ribosomal subunit protein uL2cz/uL2cy (rpl2-A).